Here is a 454-residue protein sequence, read N- to C-terminus: Probable ECA polymerase (454 aa).

A run of 11 helical transmembrane segments spans residues 3 to 23 (LGQFGGLFCIYLIAVIFILTL), 39 to 59 (FSMLYLLTFYFGFPLTCMLVF), 61 to 81 (FGVAVVPVEYLLYAMLSATAF), 119 to 139 (LALVAVGTVGIFFMQNGFLLF), 154 to 174 (GVALKRFFYFFIPAMLVVYFL), 180 to 200 (AWFFFLASTVAFGILTYVIVG), 201 to 221 (GTRANIIIAFSLFLFIGIVRG), 222 to 242 (WITLWMLAAAGVFGIVGMFWL), 340 to 360 (LVVMGGVLFIPLGAIVVGLII), 377 to 397 (YKAAILQSFCFGAVFNIIVLA), and 409 to 429 (VFFCVIFGACLVLAKLLYWLF).

The protein belongs to the WzyE family. As to quaternary structure, probably part of a complex composed of WzxE, WzyE and WzzE.

The protein resides in the cell inner membrane. The protein operates within bacterial outer membrane biogenesis; enterobacterial common antigen biosynthesis. Its function is as follows. Probably involved in the polymerization of enterobacterial common antigen (ECA) trisaccharide repeat units. The polypeptide is Probable ECA polymerase (Yersinia pseudotuberculosis serotype O:1b (strain IP 31758)).